We begin with the raw amino-acid sequence, 469 residues long: Adenosylhomocysteinase (469 aa).

Residues Thr60, Asp135, and Glu195 each contribute to the substrate site. 196–198 (TTT) serves as a coordination point for NAD(+). Lys225 and Asp229 together coordinate substrate. NAD(+) is bound by residues Asn230, 259-264 (GYGDVG), Glu282, Asn317, 338-340 (IGH), and Asn383.

It belongs to the adenosylhomocysteinase family. NAD(+) is required as a cofactor.

The protein resides in the cytoplasm. It carries out the reaction S-adenosyl-L-homocysteine + H2O = L-homocysteine + adenosine. It functions in the pathway amino-acid biosynthesis; L-homocysteine biosynthesis; L-homocysteine from S-adenosyl-L-homocysteine: step 1/1. In terms of biological role, may play a key role in the regulation of the intracellular concentration of adenosylhomocysteine. The protein is Adenosylhomocysteinase of Hyphomonas neptunium (strain ATCC 15444).